The following is a 72-amino-acid chain: Translation initiation factor IF-1 (72 aa).

Residues 1–72 enclose the S1-like domain; sequence MSKQDVIEFD…TKGRITYRGK (72 aa).

The protein belongs to the IF-1 family. Component of the 30S ribosomal translation pre-initiation complex which assembles on the 30S ribosome in the order IF-2 and IF-3, IF-1 and N-formylmethionyl-tRNA(fMet); mRNA recruitment can occur at any time during PIC assembly.

The protein localises to the cytoplasm. Functionally, one of the essential components for the initiation of protein synthesis. Stabilizes the binding of IF-2 and IF-3 on the 30S subunit to which N-formylmethionyl-tRNA(fMet) subsequently binds. Helps modulate mRNA selection, yielding the 30S pre-initiation complex (PIC). Upon addition of the 50S ribosomal subunit IF-1, IF-2 and IF-3 are released leaving the mature 70S translation initiation complex. This chain is Translation initiation factor IF-1, found in Hydrogenovibrio crunogenus (strain DSM 25203 / XCL-2) (Thiomicrospira crunogena).